Consider the following 223-residue polypeptide: Probable cytokinin riboside 5'-monophosphate phosphoribohydrolase LOGL1 (223 aa).

Residues glutamate 89, 107 to 108 (RK), 124 to 130 (GYGTMEE), and threonine 136 contribute to the substrate site. The interval 201-223 (QEVAPRTSWEMSELGYGKTPEES) is disordered.

This sequence belongs to the LOG family. In terms of tissue distribution, expressed in shoot apex, immature inflorescences and flowers.

The enzyme catalyses N(6)-(dimethylallyl)adenosine 5'-phosphate + H2O = N(6)-dimethylallyladenine + D-ribose 5-phosphate. The catalysed reaction is 9-ribosyl-trans-zeatin 5'-phosphate + H2O = trans-zeatin + D-ribose 5-phosphate. Its function is as follows. Cytokinin-activating enzyme working in the direct activation pathway. Phosphoribohydrolase that converts inactive cytokinin nucleotides to the biologically active free-base forms. This Oryza sativa subsp. japonica (Rice) protein is Probable cytokinin riboside 5'-monophosphate phosphoribohydrolase LOGL1 (LOGL1).